The following is a 692-amino-acid chain: Acyl-coenzyme A oxidase 2, peroxisomal (692 aa).

Residues 1–49 (MESRREKNPMTEEESDGLIAARRIQRLSLHLSPSLTPSPSLPLVQTETC) constitute a peroxisome transit peptide. FAD is bound by residues threonine 186, serine 192, glycine 225, arginine 365, glutamine 384, glycine 452, and threonine 473. Glutamate 475 acts as the Proton acceptor in catalysis. An FAD-binding site is contributed by aspartate 477.

The protein belongs to the acyl-CoA oxidase family. In terms of assembly, homodimer. It depends on FAD as a cofactor. In terms of tissue distribution, expressed mainly in flowers and young seedlings. Lower expression in roots, leaves and bracts.

The protein localises to the peroxisome. It carries out the reaction a 2,3-saturated acyl-CoA + O2 = a (2E)-enoyl-CoA + H2O2. Its function is as follows. Catalyzes the desaturation of long-chain acyl-CoAs to 2-trans-enoyl-CoAs. Active on substrates longer than C14 and mostly with C18-CoA. Activity on long-chain mono-unsaturated substrates is double than with the corresponding saturated substrates. This chain is Acyl-coenzyme A oxidase 2, peroxisomal, found in Arabidopsis thaliana (Mouse-ear cress).